A 193-amino-acid polypeptide reads, in one-letter code: Major structural subunit of bundle-forming pilus (193 aa).

The propeptide occupies 1-13 (MVSKIMNKKYEKG). Leucine 14 bears the N-methylleucine mark. The chain crosses the membrane as a helical span at residues 14-35 (LSLIESAMVLALAATVTAGVMF). Cysteine 129 and cysteine 179 are oxidised to a cystine.

Belongs to the N-Me-Phe pilin family. 10 to 100 laterally aligned filaments or bundle-forming pili coalesce into rope-like bundles. These form linkages between the bacteria within the enteropathogenic E.coli (EPEC) microcolonies that are attached to epithelial cells.

It is found in the fimbrium. The protein localises to the membrane. In terms of biological role, major repeating bundle-forming pilus (BFP) subunit. Is required for EPEC localized adherence. This is Major structural subunit of bundle-forming pilus (bfpA) from Escherichia coli O111:H-.